The primary structure comprises 324 residues: Heat-inducible transcription repressor HrcA (324 aa).

It belongs to the HrcA family.

Functionally, negative regulator of class I heat shock genes (grpE-dnaK-dnaJ and groELS operons). Prevents heat-shock induction of these operons. This chain is Heat-inducible transcription repressor HrcA, found in Parasynechococcus marenigrum (strain WH8102).